Here is a 376-residue protein sequence, read N- to C-terminus: Succinyl-diaminopimelate desuccinylase (376 aa).

His67 is a binding site for Zn(2+). The active site involves Asp69. Asp100 is a binding site for Zn(2+). The Proton acceptor role is filled by Glu134. The Zn(2+) site is built by Glu135, Glu163, and His349.

The protein belongs to the peptidase M20A family. DapE subfamily. In terms of assembly, homodimer. Zn(2+) is required as a cofactor. Requires Co(2+) as cofactor.

It catalyses the reaction N-succinyl-(2S,6S)-2,6-diaminopimelate + H2O = (2S,6S)-2,6-diaminopimelate + succinate. Its pathway is amino-acid biosynthesis; L-lysine biosynthesis via DAP pathway; LL-2,6-diaminopimelate from (S)-tetrahydrodipicolinate (succinylase route): step 3/3. In terms of biological role, catalyzes the hydrolysis of N-succinyl-L,L-diaminopimelic acid (SDAP), forming succinate and LL-2,6-diaminopimelate (DAP), an intermediate involved in the bacterial biosynthesis of lysine and meso-diaminopimelic acid, an essential component of bacterial cell walls. This Idiomarina loihiensis (strain ATCC BAA-735 / DSM 15497 / L2-TR) protein is Succinyl-diaminopimelate desuccinylase.